Consider the following 347-residue polypeptide: N-acetyl-gamma-glutamyl-phosphate reductase (347 aa).

Residue Cys-151 is part of the active site.

Belongs to the NAGSA dehydrogenase family. Type 1 subfamily.

It is found in the cytoplasm. The enzyme catalyses N-acetyl-L-glutamate 5-semialdehyde + phosphate + NADP(+) = N-acetyl-L-glutamyl 5-phosphate + NADPH + H(+). It participates in amino-acid biosynthesis; L-arginine biosynthesis; N(2)-acetyl-L-ornithine from L-glutamate: step 3/4. In terms of biological role, catalyzes the NADPH-dependent reduction of N-acetyl-5-glutamyl phosphate to yield N-acetyl-L-glutamate 5-semialdehyde. This is N-acetyl-gamma-glutamyl-phosphate reductase from Pelotomaculum thermopropionicum (strain DSM 13744 / JCM 10971 / SI).